The chain runs to 158 residues: Protein-export protein SecB (158 aa).

Belongs to the SecB family. Homotetramer, a dimer of dimers. One homotetramer interacts with 1 SecA dimer.

The protein localises to the cytoplasm. Its function is as follows. One of the proteins required for the normal export of preproteins out of the cell cytoplasm. It is a molecular chaperone that binds to a subset of precursor proteins, maintaining them in a translocation-competent state. It also specifically binds to its receptor SecA. The sequence is that of Protein-export protein SecB from Rhodopseudomonas palustris (strain BisB5).